We begin with the raw amino-acid sequence, 184 residues long: Signal peptidase I S (184 aa).

Over 1–18 (MKSENVSKKKSILEWAKA) the chain is Cytoplasmic. The helical transmembrane segment at 19 to 39 (IVIAVVLALLIRNFIFAPYVV) threads the bilayer. The Extracellular portion of the chain corresponds to 40–184 (DGDSMYPTLH…YPFNEMRKTN (145 aa)). Residues S43 and K83 contribute to the active site.

Belongs to the peptidase S26 family.

It is found in the cell membrane. The enzyme catalyses Cleavage of hydrophobic, N-terminal signal or leader sequences from secreted and periplasmic proteins.. In terms of biological role, not essential for cell viability, but required for efficient secretion of many proteins. This Bacillus subtilis (strain 168) protein is Signal peptidase I S (sipS).